The chain runs to 239 residues: Large ribosomal subunit protein uL2 (239 aa).

Positions 200–239 (VNHPHGGKEHHIGRPSTVSRRAPPGRKVGHIAARRTGRRK) are disordered. Residues 222–239 (PPGRKVGHIAARRTGRRK) are compositionally biased toward basic residues.

This sequence belongs to the universal ribosomal protein uL2 family. As to quaternary structure, part of the 50S ribosomal subunit. Forms a bridge to the 30S subunit in the 70S ribosome.

Its function is as follows. One of the primary rRNA binding proteins. Required for association of the 30S and 50S subunits to form the 70S ribosome, for tRNA binding and peptide bond formation. It has been suggested to have peptidyltransferase activity; this is somewhat controversial. Makes several contacts with the 16S rRNA in the 70S ribosome. The chain is Large ribosomal subunit protein uL2 from Thermococcus onnurineus (strain NA1).